The primary structure comprises 533 residues: Apolipoprotein N-acyltransferase (533 aa).

The next 5 helical transmembrane spans lie at 17–37 (FFLP…WPAV), 72–92 (LLFC…GGIL), 116–136 (GFRS…WAYM), 165–185 (GVWG…LLFM), and 190–210 (FQVK…PLLY). The 268-residue stretch at 232–499 (VQPDIDPHEK…QSVLTADVPL (268 aa)) folds into the CN hydrolase domain. The active-site Proton acceptor is glutamate 274. Lysine 352 is an active-site residue. Cysteine 410 serves as the catalytic Nucleophile. A helical membrane pass occupies residues 510–530 (PDLVPHVCLGIAGVLALVAAV).

The protein belongs to the CN hydrolase family. Apolipoprotein N-acyltransferase subfamily.

Its subcellular location is the cell inner membrane. It carries out the reaction N-terminal S-1,2-diacyl-sn-glyceryl-L-cysteinyl-[lipoprotein] + a glycerophospholipid = N-acyl-S-1,2-diacyl-sn-glyceryl-L-cysteinyl-[lipoprotein] + a 2-acyl-sn-glycero-3-phospholipid + H(+). Its pathway is protein modification; lipoprotein biosynthesis (N-acyl transfer). Functionally, catalyzes the phospholipid dependent N-acylation of the N-terminal cysteine of apolipoprotein, the last step in lipoprotein maturation. The sequence is that of Apolipoprotein N-acyltransferase from Chlorobaculum tepidum (strain ATCC 49652 / DSM 12025 / NBRC 103806 / TLS) (Chlorobium tepidum).